Consider the following 421-residue polypeptide: UV-B-induced protein At3g17800, chloroplastic (421 aa).

Disordered regions lie at residues 1-40 (MDALTSSLVRSPIVPSRTSDNGSGSMFLTASGPGFTRSGS) and 74-95 (VRASSASNDASSGSSPKPIAPL). A chloroplast-targeting transit peptide spans 1-75 (MDALTSSLVR…AKTRRSFVVR (75 aa)). Polar residues predominate over residues 16 to 28 (SRTSDNGSGSMFL). Positions 74-88 (VRASSASNDASSGSS) are enriched in low complexity.

The protein localises to the plastid. The protein resides in the chloroplast. The sequence is that of UV-B-induced protein At3g17800, chloroplastic from Arabidopsis thaliana (Mouse-ear cress).